A 98-amino-acid chain; its full sequence is Large ribosomal subunit protein uL23 (98 aa).

This sequence belongs to the universal ribosomal protein uL23 family. Part of the 50S ribosomal subunit. Contacts protein L29, and trigger factor when it is bound to the ribosome.

Functionally, one of the early assembly proteins it binds 23S rRNA. One of the proteins that surrounds the polypeptide exit tunnel on the outside of the ribosome. Forms the main docking site for trigger factor binding to the ribosome. The polypeptide is Large ribosomal subunit protein uL23 (Maricaulis maris (strain MCS10) (Caulobacter maris)).